The primary structure comprises 94 residues: Co-chaperonin GroES (94 aa).

Belongs to the GroES chaperonin family. In terms of assembly, heptamer of 7 subunits arranged in a ring. Interacts with the chaperonin GroEL.

The protein resides in the cytoplasm. In terms of biological role, together with the chaperonin GroEL, plays an essential role in assisting protein folding. The GroEL-GroES system forms a nano-cage that allows encapsulation of the non-native substrate proteins and provides a physical environment optimized to promote and accelerate protein folding. GroES binds to the apical surface of the GroEL ring, thereby capping the opening of the GroEL channel. This chain is Co-chaperonin GroES, found in Lactococcus lactis subsp. lactis (strain IL1403) (Streptococcus lactis).